Consider the following 313-residue polypeptide: Ribosomal RNA small subunit methyltransferase H (313 aa).

Residues 35 to 37 (GGH), D55, F79, D100, and Q107 contribute to the S-adenosyl-L-methionine site.

It belongs to the methyltransferase superfamily. RsmH family.

The protein localises to the cytoplasm. The enzyme catalyses cytidine(1402) in 16S rRNA + S-adenosyl-L-methionine = N(4)-methylcytidine(1402) in 16S rRNA + S-adenosyl-L-homocysteine + H(+). Its function is as follows. Specifically methylates the N4 position of cytidine in position 1402 (C1402) of 16S rRNA. The chain is Ribosomal RNA small subunit methyltransferase H from Burkholderia thailandensis (strain ATCC 700388 / DSM 13276 / CCUG 48851 / CIP 106301 / E264).